The chain runs to 476 residues: Cytosolic iron-sulfur assembly component 3 (476 aa).

N-acetylalanine is present on Ala2. Cys24, Cys71, Cys74, Cys77, Cys190, Cys246, Cys395, and Cys399 together coordinate [4Fe-4S] cluster.

It belongs to the NARF family. External component of the CIA complex. In the CIA complex, interacts directly with CIAO1 and MMS19.

Component of the cytosolic iron-sulfur protein assembly (CIA) complex, a multiprotein complex that mediates the incorporation of iron-sulfur cluster into extramitochondrial Fe/S proteins. Seems to negatively regulate the level of HIF1A expression, although this effect could be indirect. This is Cytosolic iron-sulfur assembly component 3 from Bos taurus (Bovine).